The following is a 162-amino-acid chain: Protein-export protein SecB (162 aa).

Belongs to the SecB family. In terms of assembly, homotetramer, a dimer of dimers. One homotetramer interacts with 1 SecA dimer.

It localises to the cytoplasm. Its function is as follows. One of the proteins required for the normal export of preproteins out of the cell cytoplasm. It is a molecular chaperone that binds to a subset of precursor proteins, maintaining them in a translocation-competent state. It also specifically binds to its receptor SecA. This Legionella pneumophila subsp. pneumophila (strain Philadelphia 1 / ATCC 33152 / DSM 7513) protein is Protein-export protein SecB.